The sequence spans 337 residues: Glycerol-3-phosphate dehydrogenase [NAD(P)+] (337 aa).

The NADPH site is built by Ser11, Trp12, Arg32, and Lys109. 3 residues coordinate sn-glycerol 3-phosphate: Lys109, Gly140, and Ser142. An NADPH-binding site is contributed by Ala144. Positions 195, 248, 258, 259, and 260 each coordinate sn-glycerol 3-phosphate. Residue Lys195 is the Proton acceptor of the active site. NADPH is bound at residue Arg259. NADPH is bound by residues Val283 and Glu285.

The protein belongs to the NAD-dependent glycerol-3-phosphate dehydrogenase family.

The protein localises to the cytoplasm. It catalyses the reaction sn-glycerol 3-phosphate + NAD(+) = dihydroxyacetone phosphate + NADH + H(+). It carries out the reaction sn-glycerol 3-phosphate + NADP(+) = dihydroxyacetone phosphate + NADPH + H(+). The protein operates within membrane lipid metabolism; glycerophospholipid metabolism. In terms of biological role, catalyzes the reduction of the glycolytic intermediate dihydroxyacetone phosphate (DHAP) to sn-glycerol 3-phosphate (G3P), the key precursor for phospholipid synthesis. The chain is Glycerol-3-phosphate dehydrogenase [NAD(P)+] from Limosilactobacillus fermentum (strain NBRC 3956 / LMG 18251) (Lactobacillus fermentum).